A 436-amino-acid polypeptide reads, in one-letter code: Calcium/calmodulin-regulated receptor-like kinase 2 (436 aa).

The chain crosses the membrane as a helical span at residues 7 to 34; the sequence is LVVIGISVGLALGLLLALLLFFAIKWYY. The disordered stretch occupies residues 65–88; it reads DRANTESSQPPENGAPTQHQPWWN. Residues 69-88 show a composition bias toward polar residues; that stretch reads TESSQPPENGAPTQHQPWWN. The 262-residue stretch at 114 to 375 folds into the Protein kinase domain; it reads QNFTTVLGQG…PSIGEVTQFI (262 aa). ATP contacts are provided by residues 120-128 and K142; that span reads LGQGSFGPV. A Phosphotyrosine modification is found at Y187. Residue D239 is the Proton acceptor of the active site. At T276 the chain carries Phosphothreonine. Y284 is modified (phosphotyrosine).

Belongs to the protein kinase superfamily. Ser/Thr protein kinase family.

It localises to the cell membrane. It catalyses the reaction L-seryl-[protein] + ATP = O-phospho-L-seryl-[protein] + ADP + H(+). It carries out the reaction L-threonyl-[protein] + ATP = O-phospho-L-threonyl-[protein] + ADP + H(+). The polypeptide is Calcium/calmodulin-regulated receptor-like kinase 2 (Arabidopsis thaliana (Mouse-ear cress)).